The chain runs to 556 residues: Arginine--tRNA ligase (556 aa).

Residues 132–142 carry the 'HIGH' region motif; that stretch reads ANPTGDLHLGH.

It belongs to the class-I aminoacyl-tRNA synthetase family. In terms of assembly, monomer.

It localises to the cytoplasm. The enzyme catalyses tRNA(Arg) + L-arginine + ATP = L-arginyl-tRNA(Arg) + AMP + diphosphate. In Listeria welshimeri serovar 6b (strain ATCC 35897 / DSM 20650 / CCUG 15529 / CIP 8149 / NCTC 11857 / SLCC 5334 / V8), this protein is Arginine--tRNA ligase.